Reading from the N-terminus, the 77-residue chain is Putative defensin-like protein 120 (77 aa).

A signal peptide spans 1–26 (MTQKATILAIFMVVLVLGLETKETQG). 4 cysteine pairs are disulfide-bonded: cysteine 30-cysteine 75, cysteine 39-cysteine 60, cysteine 44-cysteine 69, and cysteine 48-cysteine 71.

The protein belongs to the DEFL family.

The protein resides in the secreted. The chain is Putative defensin-like protein 120 (LCR56) from Arabidopsis thaliana (Mouse-ear cress).